A 196-amino-acid polypeptide reads, in one-letter code: HTH-type transcriptional regulator EcpR (196 aa).

The HTH luxR-type domain occupies 138 to 196 (KDIKKDKITDREMEIIRMTAQGMLPKSIARIENCSVKTVYTHRRNAEAKLYSKLYKLVQ). Residues 162–181 (PKSIARIENCSVKTVYTHRR) constitute a DNA-binding region (H-T-H motif).

Belongs to the EcpR/MatA family.

It is found in the cytoplasm. In terms of biological role, part of the ecpRABCDE operon, which encodes the E.coli common pilus (ECP). ECP is found in both commensal and pathogenic strains and plays a dual role in early-stage biofilm development and host cell recognition. Positively regulates the expression of the ecp operon by binding to two TTCCT boxes. In Escherichia coli O157:H7, this protein is HTH-type transcriptional regulator EcpR (ecpR).